A 335-amino-acid chain; its full sequence is MIEADRIISGQAKVDEDVIDRAIRPKLLADYVGQPQVREQMDIFIKAAKLRQDALDHLLIFGPPGLGKTTLANIVANEMGVNIRTTSGPVLEKAGDLAAMLTNLEPHDVLFIDEIHRLSPAIEEVLYPAMEDYQLDIMIGEGPAARSIKLDLPPFTLVGATTRAGSLTSPLRDRFGIVQRLEFYSVEDLTSIVARSAGCLNLELEQQAAFEVARRSRGTPRIANRLLRRVRDYADVRNGGVISVDVAKQALSMLDVDDAGFDYLDRKLLSAVIERFDGGPVGLDNLAAAIGEERDTIEDVLEPYLIQQGFLQRTPRGRIATSKTYRHFGLQKLSD.

The segment at 4 to 184 (ADRIISGQAK…FGIVQRLEFY (181 aa)) is large ATPase domain (RuvB-L). Residues I23, R24, G65, K68, T69, T70, 131–133 (EDY), R174, Y184, and R221 contribute to the ATP site. Residue T69 coordinates Mg(2+). The small ATPAse domain (RuvB-S) stretch occupies residues 185 to 255 (SVEDLTSIVA…VAKQALSMLD (71 aa)). A head domain (RuvB-H) region spans residues 258 to 335 (DAGFDYLDRK…RHFGLQKLSD (78 aa)). R294, R313, and R318 together coordinate DNA.

This sequence belongs to the RuvB family. Homohexamer. Forms an RuvA(8)-RuvB(12)-Holliday junction (HJ) complex. HJ DNA is sandwiched between 2 RuvA tetramers; dsDNA enters through RuvA and exits via RuvB. An RuvB hexamer assembles on each DNA strand where it exits the tetramer. Each RuvB hexamer is contacted by two RuvA subunits (via domain III) on 2 adjacent RuvB subunits; this complex drives branch migration. In the full resolvosome a probable DNA-RuvA(4)-RuvB(12)-RuvC(2) complex forms which resolves the HJ.

Its subcellular location is the cytoplasm. The catalysed reaction is ATP + H2O = ADP + phosphate + H(+). Its function is as follows. The RuvA-RuvB-RuvC complex processes Holliday junction (HJ) DNA during genetic recombination and DNA repair, while the RuvA-RuvB complex plays an important role in the rescue of blocked DNA replication forks via replication fork reversal (RFR). RuvA specifically binds to HJ cruciform DNA, conferring on it an open structure. The RuvB hexamer acts as an ATP-dependent pump, pulling dsDNA into and through the RuvAB complex. RuvB forms 2 homohexamers on either side of HJ DNA bound by 1 or 2 RuvA tetramers; 4 subunits per hexamer contact DNA at a time. Coordinated motions by a converter formed by DNA-disengaged RuvB subunits stimulates ATP hydrolysis and nucleotide exchange. Immobilization of the converter enables RuvB to convert the ATP-contained energy into a lever motion, pulling 2 nucleotides of DNA out of the RuvA tetramer per ATP hydrolyzed, thus driving DNA branch migration. The RuvB motors rotate together with the DNA substrate, which together with the progressing nucleotide cycle form the mechanistic basis for DNA recombination by continuous HJ branch migration. Branch migration allows RuvC to scan DNA until it finds its consensus sequence, where it cleaves and resolves cruciform DNA. The chain is Holliday junction branch migration complex subunit RuvB from Haemophilus influenzae (strain PittEE).